Here is a 223-residue protein sequence, read N- to C-terminus: Glutathione S-transferase A2 (223 aa).

Alanine 2 carries the N-acetylalanine modification. Residues 3–83 (GKPKLHYFNG…YIATKYNLYG (81 aa)) enclose the GST N-terminal domain. Lysine 4 carries the post-translational modification N6-succinyllysine. Glutathione-binding positions include tyrosine 9, arginine 45, 54–55 (QV), and 67–68 (QT). Residues 85–208 (DMKERALIDM…QPGSQRKPPM (124 aa)) enclose the GST C-terminal domain.

It belongs to the GST superfamily. Alpha family. Homodimer. As to expression, expressed in corpus luteum, adrenal gland, testis, liver, lung, thyroid and kidney.

Its subcellular location is the cytoplasm. The enzyme catalyses RX + glutathione = an S-substituted glutathione + a halide anion + H(+). Its function is as follows. Conjugation of reduced glutathione to a wide number of exogenous and endogenous hydrophobic electrophiles. In Bos taurus (Bovine), this protein is Glutathione S-transferase A2 (GSTA2).